The chain runs to 214 residues: Small ribosomal subunit protein eS1 (214 aa).

This sequence belongs to the eukaryotic ribosomal protein eS1 family.

In Aeropyrum pernix (strain ATCC 700893 / DSM 11879 / JCM 9820 / NBRC 100138 / K1), this protein is Small ribosomal subunit protein eS1.